The sequence spans 642 residues: Threonine--tRNA ligase (642 aa).

In terms of domain architecture, TGS spans 1–61 (MPVITLPDGS…ESDAQLAIIT (61 aa)). A catalytic region spans residues 243 to 534 (DHRKIGKQLD…LTEEYAGFFP (292 aa)). Zn(2+) contacts are provided by C334, H385, and H511.

Belongs to the class-II aminoacyl-tRNA synthetase family. As to quaternary structure, homodimer. Requires Zn(2+) as cofactor.

Its subcellular location is the cytoplasm. It catalyses the reaction tRNA(Thr) + L-threonine + ATP = L-threonyl-tRNA(Thr) + AMP + diphosphate + H(+). In terms of biological role, catalyzes the attachment of threonine to tRNA(Thr) in a two-step reaction: L-threonine is first activated by ATP to form Thr-AMP and then transferred to the acceptor end of tRNA(Thr). Also edits incorrectly charged L-seryl-tRNA(Thr). This chain is Threonine--tRNA ligase, found in Yersinia pseudotuberculosis serotype O:1b (strain IP 31758).